Here is a 650-residue protein sequence, read N- to C-terminus: Probable E3 ubiquitin ligase complex SCF subunit scon-2 (650 aa).

The F-box domain occupies 124-170 (IDFISALPVELAQKVLCYLDTVSLTKAAQVSQRWRTLADSDAVWVRM). The tract at residues 200 to 244 (QRQLAKGGPQGRVTELADSHDSQDRSVNQHGKRPAAEAEEEDPIK) is disordered. The segment covering 214–223 (ELADSHDSQD) has biased composition (basic and acidic residues). 5 WD repeats span residues 292 to 320 (GHEN…KIWN), 332 to 360 (GHTA…KVWN), 372 to 400 (AHTD…KIFD), 411 to 441 (GHSD…KLWD), and 453 to 488 (GHVG…AMSV). A disordered region spans residues 482 to 525 (NQDAMSVSSGGSGSPSMSHAQIERAGSPGSHSSSHNLLPSSLPS). Low complexity-rich tracts occupy residues 487–499 (SVSS…PSMS) and 507–525 (GSPG…SLPS). 3 WD repeats span residues 528-564 (EDVR…RLWD), 576-604 (GHLE…KTWE), and 616-644 (GHCG…RLHS).

Belongs to the WD repeat MET30/SCONB/SCON-2 family. Component of the SCF(scon-2) E3 ubiquitin ligase complex.

It participates in protein modification; protein ubiquitination. Component of the SCF(scon-2) E3 ubiquitin ligase complex involved in the regulation of sulfur metabolite repression, probably by mediating the inactivation or degradation of the metR transcription factor. The sequence is that of Probable E3 ubiquitin ligase complex SCF subunit scon-2 (scon-2) from Neurospora crassa (strain ATCC 24698 / 74-OR23-1A / CBS 708.71 / DSM 1257 / FGSC 987).